We begin with the raw amino-acid sequence, 530 residues long: TNF receptor-associated factor family protein DDB_G0272829 (530 aa).

Residues 35–81 form an RING-type; degenerate zinc finger; sequence CQICEGLLISSLIPNRMKALQCINGHCFCLTCWESILEIKSECPTCR. 2 TRAF-type zinc fingers span residues 134–188 and 189–246; these read RHES…KQMQ and GHIL…NDND. 3 disordered regions span residues 242 to 267, 391 to 432, and 483 to 530; these read NNDN…LSSS, TTTT…DNQG, and FNQL…GTSL. Low complexity-rich tracts occupy residues 253–267, 391–415, and 485–502; these read NNSN…LSSS, TTTT…NNNN, and QLSQ…SQSL. Residues 361-422 adopt a coiled-coil conformation; sequence ILEHQQQQNQ…NNNNEDEEDD (62 aa). The segment covering 509–530 has biased composition (polar residues); it reads ITINQNQNTPSNPFSIFSGTSL.

Belongs to the TNF receptor-associated factor family.

It localises to the cytoplasm. Probable adapter protein and signal transducer that links members of the tumor necrosis factor receptor family to different signaling pathways by association with the receptor cytoplasmic domain and kinases. The polypeptide is TNF receptor-associated factor family protein DDB_G0272829 (Dictyostelium discoideum (Social amoeba)).